The primary structure comprises 382 residues: Beta-1,4-galactosyltransferase 6 (382 aa).

Topologically, residues 1 to 15 (MSALKRMMRVSNRSL) are cytoplasmic. A helical; Signal-anchor for type II membrane protein transmembrane segment spans residues 16–35 (IAFIFFFSLSTSCLYFIYVA). Over 36 to 382 (PGIANTYLFM…MPELAPIEDY (347 aa)) the chain is Lumenal. Asn71, Asn75, Asn83, Asn84, Asn99, and Asn122 each carry an N-linked (GlcNAc...) asparagine glycan. An intrachain disulfide couples Cys108 to Cys152. UDP-alpha-D-galactose is bound by residues 163–167 (PFRNR), 202–204 (FNR), 229–230 (VD), Tyr258, and Trp290. Cys223 and Cys242 form a disulfide bridge. Asp230 serves as a coordination point for Mn(2+). 292-295 (GEDD) serves as a coordination point for N-acetyl-D-glucosamine. Asn307 carries N-linked (GlcNAc...) asparagine glycosylation. Residue His323 coordinates Mn(2+). 323-324 (HH) serves as a coordination point for UDP-alpha-D-galactose. Arg334 serves as a coordination point for N-acetyl-D-glucosamine. Asn367 carries N-linked (GlcNAc...) asparagine glycosylation.

It belongs to the glycosyltransferase 7 family. It depends on Mn(2+) as a cofactor. The cofactor is Mg(2+). Ca(2+) is required as a cofactor. As to expression, brain and kidney.

It is found in the golgi apparatus. It localises to the golgi stack membrane. The catalysed reaction is a beta-D-glucosyl-(1&lt;-&gt;1')-N-acylsphing-4-enine + UDP-alpha-D-galactose = a beta-D-Gal-(1-&gt;4)-beta-D-Glc-(1&lt;-&gt;1)-Cer(d18:1(4E)) + UDP + H(+). It functions in the pathway protein modification; protein glycosylation. It participates in sphingolipid metabolism. With respect to regulation, inhibited by EDTA. Its function is as follows. Catalyzes the synthesis of lactosylceramide (LacCer) via the transfer of galactose from UDP-galactose to glucosylceramide (GlcCer). LacCer is the starting point in the biosynthesis of all gangliosides (membrane-bound glycosphingolipids) which play pivotal roles in the CNS including neuronal maturation and axonal and myelin formation. In Mus musculus (Mouse), this protein is Beta-1,4-galactosyltransferase 6.